Reading from the N-terminus, the 2414-residue chain is Centrosome-associated protein CEP250 (2414 aa).

Coiled coils occupy residues 91 to 153 (EEPN…ELVR) and 248 to 357 (LVAK…VEEE). Disordered stretches follow at residues 356 to 384 (EEDT…DPQD), 672 to 707 (AEEA…QETA), 1191 to 1212 (SRPE…DPDQ), 1269 to 1303 (EAQK…QNSL), 2050 to 2071 (AGAR…QERQ), 2194 to 2238 (ALEE…KERL), and 2275 to 2317 (RERR…GSSD). Residues 371–381 (QSDCNGLSQFD) show a composition bias toward polar residues. Positions 400 to 1165 (QQAVQDLRQQ…QLEALVAEQQ (766 aa)) form a coiled coil. Positions 684–704 (RGTREEKEELKDKLSEAHHQQ) are enriched in basic and acidic residues. 2 coiled-coil regions span residues 1237–2200 (LQKL…EQQS) and 2231–2290 (GVEE…ASRA). The segment covering 1280-1289 (QDLQRQLSQS) has biased composition (low complexity). Residues 2196-2209 (EEQQSGGPHSTSRA) show a composition bias toward polar residues. Residues 2275-2286 (RERRKLKRDSVR) are compositionally biased toward basic and acidic residues. Ser-2292 carries the phosphoserine modification. Residues 2305–2317 (QQDGRGSQRGSSD) show a composition bias toward low complexity. A coiled-coil region spans residues 2320-2345 (LVVELQREVALLRAQLALERKQRQDY). Ser-2389 and Ser-2393 each carry phosphoserine; by NEK2. The segment at 2390–2414 (LNQSLTSPGPCLLHPSLDTTQNTHR) is disordered.

Monomer and homodimer. Forms a complex in vitro with both NEK2 kinase and the PPP1CC catalytic subunit of protein phosphatase 1 (PP1). Interacts with CEP135. Interacts with CROCC/rootletin. Interacts with CNTLN. Interacts with NIN (via C-terminus). Differentially phosphorylated during cell cycle. Phosphorylation may regulate association/dissociation from centrosome. During M phase of mitosis, C-terminal part is phosphorylated by NEK2, suggesting that it may trigger the dissociation from the mitotic centrosome. Dephosphorylated in vitro by the PP1 phosphatase. As to expression, expressed in the retina.

It is found in the cytoplasm. The protein resides in the perinuclear region. Its subcellular location is the cytoskeleton. The protein localises to the microtubule organizing center. It localises to the centrosome. It is found in the centriole. The protein resides in the cilium basal body. Its subcellular location is the cell projection. The protein localises to the cilium. It localises to the photoreceptor outer segment. It is found in the photoreceptor inner segment. Functionally, plays an important role in centrosome cohesion during interphase. Recruits CCDC102B to the proximal ends of centrioles. Maintains centrosome cohesion by forming intercentriolar linkages. Accumulates at the proximal end of each centriole, forming supramolecular assemblies with viscous material properties that promote organelle cohesion. May be involved in ciliogenesis. The sequence is that of Centrosome-associated protein CEP250 (Cep250) from Mus musculus (Mouse).